We begin with the raw amino-acid sequence, 1080 residues long: DNA-directed RNA polymerase subunit beta (1080 aa).

It belongs to the RNA polymerase beta chain family. In terms of assembly, in plastids the minimal PEP RNA polymerase catalytic core is composed of four subunits: alpha, beta, beta', and beta''. When a (nuclear-encoded) sigma factor is associated with the core the holoenzyme is formed, which can initiate transcription.

The protein localises to the plastid. It localises to the chloroplast. The enzyme catalyses RNA(n) + a ribonucleoside 5'-triphosphate = RNA(n+1) + diphosphate. Functionally, DNA-dependent RNA polymerase catalyzes the transcription of DNA into RNA using the four ribonucleoside triphosphates as substrates. This is DNA-directed RNA polymerase subunit beta from Mesostigma viride (Green alga).